A 194-amino-acid chain; its full sequence is MNLDEVITGVVLAGGKARRMGGADKGLLELGGKPLWRHVADALAPQLATVVISANRHLDIYQASGLKVIPDSIADFPGPLAGMLSVFQQVAGDWFLFCPCDNPCIPHNLVDRLAAQRHGAPVVWVHDGERDHPTIALINRAVEPQLTAYLQAGERRVMIFMRQVGGHAVDFSDCKEAFVNVNTPEELAQWQKRP.

GTP is bound by residues 12 to 14, Lys25, Asp71, and Asp101; that span reads LAG. Asp101 is a Mg(2+) binding site.

It belongs to the MobA family. In terms of assembly, monomer. Mg(2+) serves as cofactor.

Its subcellular location is the cytoplasm. The enzyme catalyses Mo-molybdopterin + GTP + H(+) = Mo-molybdopterin guanine dinucleotide + diphosphate. Functionally, transfers a GMP moiety from GTP to Mo-molybdopterin (Mo-MPT) cofactor (Moco or molybdenum cofactor) to form Mo-molybdopterin guanine dinucleotide (Mo-MGD) cofactor. The chain is Molybdenum cofactor guanylyltransferase from Salmonella typhimurium (strain LT2 / SGSC1412 / ATCC 700720).